Here is a 357-residue protein sequence, read N- to C-terminus: 3'(2'),5'-bisphosphate nucleotidase (357 aa).

The Proton acceptor role is filled by D49. Residues E72, D142, I144, and D145 each contribute to the Mg(2+) site. T147 serves as the catalytic Proton acceptor. Positions 147, 241, 264, 267, 281, and 294 each coordinate adenosine 3',5'-bisphosphate. H241, S264, K267, R281, and D294 together coordinate AMP. Mg(2+) is bound at residue D294.

The protein belongs to the inositol monophosphatase superfamily. Mg(2+) is required as a cofactor.

It is found in the cytoplasm. The protein resides in the nucleus. The enzyme catalyses 3'-phosphoadenylyl sulfate + H2O = adenosine 5'-phosphosulfate + phosphate. The catalysed reaction is adenosine 3',5'-bisphosphate + H2O = AMP + phosphate. It carries out the reaction adenosine 2',5'-bisphosphate + H2O = AMP + phosphate. Phosphatase activity is very sensitive to lithium and moderately sensitive to sodium. The inhibitory effects of lithium and sodium are overcome by high concentrations of potassium. Lithium exerts its inhibitory action by blocking the products of the PAP hydrolysis at the active site. Its function is as follows. Phosphatase that converts adenosine 3'-phosphate 5'-phosphosulfate (PAPS) to adenosine 5'-phosphosulfate (APS) and 3'(2')-phosphoadenosine 5'-phosphate (PAP) to AMP. May regulate the flux of sulfur in the sulfur-activation pathway by converting PAPS to APS. Involved in salt tolerance. Confers resistance to lithium. Shows no activity on inositol mono- and diphosphates, 3'-AMP, AMP, nicotinamide adenine dinucleotide phosphate (NADP), and p-nitrophenylphosphate. This chain is 3'(2'),5'-bisphosphate nucleotidase (MET22), found in Saccharomyces cerevisiae (strain ATCC 204508 / S288c) (Baker's yeast).